Here is a 166-residue protein sequence, read N- to C-terminus: Ferric nitrobindin-like protein (166 aa).

A GXWXGXG motif is present at residues 21–27 (GHWEGEG).

This sequence belongs to the nitrobindin family.

This Cutibacterium acnes (strain DSM 16379 / KPA171202) (Propionibacterium acnes) protein is Ferric nitrobindin-like protein.